A 202-amino-acid chain; its full sequence is AFG2-interacting ribosome maturation factor (202 aa).

Part of the 55LCC heterohexameric ATPase complex. Does not associate with pre-60S ribosomal particles.

Its subcellular location is the nucleus. The protein localises to the cytoplasm. In terms of biological role, part of the 55LCC heterohexameric ATPase complex which is chromatin-associated and promotes replisome proteostasis to maintain replication fork progression and genome stability. Required for replication fork progression, sister chromatid cohesion, and chromosome stability. The ATPase activity is specifically enhanced by replication fork DNA and is coupled to cysteine protease-dependent cleavage of replisome substrates in response to replication fork damage. Uses ATPase activity to process replisome substrates in S-phase, facilitating their proteolytic turnover from chromatin to ensure DNA replication and mitotic fidelity. Involved in the cytoplasmic maturation steps of pre-60S ribosomal particles by promoting the release of shuttling protein RSL24D1/RLP24 from the pre-ribosomal particles. Plays an essential role in early embryonic development. The polypeptide is AFG2-interacting ribosome maturation factor (airim) (Danio rerio (Zebrafish)).